A 365-amino-acid chain; its full sequence is MDAYEYSELLKLLNTKLNNIKGILKPDILNKRLEEIKNEEASQDFWNDVENATKIGIEKNRILGKLNKFNKAFDSLTGTNELYEMATAEKDDETLEMLYEEASDLENLIKSTEISVMLSNPDDSSNAIVSIHPGAGGTESQDWASILYRMYLRWAERNDFKVELLDYQAGDEAGIKDVSFIIKGENAYGYMKAENGIHRLVRISPFDSNAKRHTSFSSVMVSPEIDDNINIVIEDKDIRIDTYRASGAGGQHVNKTESAIRITHIPTGIVVQCQNDRSQHKNKDSAFKMLKSRLYEYELEKQRASKDGIEKSDNGWGHQIRSYVLQPYQQVKDSRSNIGYSNVDAILDGDITKMIEDVLIATNTN.

Q251 is modified (N5-methylglutamine).

It belongs to the prokaryotic/mitochondrial release factor family. In terms of processing, methylated by PrmC. Methylation increases the termination efficiency of RF2.

It localises to the cytoplasm. Peptide chain release factor 2 directs the termination of translation in response to the peptide chain termination codons UGA and UAA. The chain is Peptide chain release factor 2 from Aliarcobacter butzleri (strain RM4018) (Arcobacter butzleri).